Consider the following 385-residue polypeptide: 1-deoxy-D-xylulose 5-phosphate reductoisomerase (385 aa).

The NADPH site is built by T13, G14, S15, I16, N40, and N122. K123 is a binding site for 1-deoxy-D-xylulose 5-phosphate. Position 124 (E124) interacts with NADPH. Residue D148 coordinates Mn(2+). S149, E150, S177, and H200 together coordinate 1-deoxy-D-xylulose 5-phosphate. Residue E150 participates in Mn(2+) binding. Residue G206 coordinates NADPH. The 1-deoxy-D-xylulose 5-phosphate site is built by S213, N218, K219, and E222. A Mn(2+)-binding site is contributed by E222.

The protein belongs to the DXR family. It depends on Mg(2+) as a cofactor. Requires Mn(2+) as cofactor.

It carries out the reaction 2-C-methyl-D-erythritol 4-phosphate + NADP(+) = 1-deoxy-D-xylulose 5-phosphate + NADPH + H(+). It participates in isoprenoid biosynthesis; isopentenyl diphosphate biosynthesis via DXP pathway; isopentenyl diphosphate from 1-deoxy-D-xylulose 5-phosphate: step 1/6. Functionally, catalyzes the NADPH-dependent rearrangement and reduction of 1-deoxy-D-xylulose-5-phosphate (DXP) to 2-C-methyl-D-erythritol 4-phosphate (MEP). The chain is 1-deoxy-D-xylulose 5-phosphate reductoisomerase from Francisella tularensis subsp. tularensis (strain WY96-3418).